Here is a 117-residue protein sequence, read N- to C-terminus: Acylphosphatase (117 aa).

The 87-residue stretch at 31-117 (RWRWIIQGQV…RGDDWFEVRY (87 aa)) folds into the Acylphosphatase-like domain. Catalysis depends on residues Arg46 and Asn64.

It belongs to the acylphosphatase family.

The enzyme catalyses an acyl phosphate + H2O = a carboxylate + phosphate + H(+). This is Acylphosphatase (acyP) from Synechococcus sp. (strain CC9902).